The primary structure comprises 268 residues: Hydroxyethylthiazole kinase (268 aa).

Methionine 45 is a substrate binding site. Residues arginine 121 and threonine 167 each coordinate ATP. Glycine 194 contributes to the substrate binding site.

Belongs to the Thz kinase family. Mg(2+) serves as cofactor.

It catalyses the reaction 5-(2-hydroxyethyl)-4-methylthiazole + ATP = 4-methyl-5-(2-phosphooxyethyl)-thiazole + ADP + H(+). It participates in cofactor biosynthesis; thiamine diphosphate biosynthesis; 4-methyl-5-(2-phosphoethyl)-thiazole from 5-(2-hydroxyethyl)-4-methylthiazole: step 1/1. Catalyzes the phosphorylation of the hydroxyl group of 4-methyl-5-beta-hydroxyethylthiazole (THZ). The chain is Hydroxyethylthiazole kinase from Bacillus cereus (strain ATCC 10987 / NRS 248).